Reading from the N-terminus, the 185-residue chain is Elongation factor P (185 aa).

This sequence belongs to the elongation factor P family.

It localises to the cytoplasm. It functions in the pathway protein biosynthesis; polypeptide chain elongation. Functionally, involved in peptide bond synthesis. Stimulates efficient translation and peptide-bond synthesis on native or reconstituted 70S ribosomes in vitro. Probably functions indirectly by altering the affinity of the ribosome for aminoacyl-tRNA, thus increasing their reactivity as acceptors for peptidyl transferase. This Clostridium perfringens (strain ATCC 13124 / DSM 756 / JCM 1290 / NCIMB 6125 / NCTC 8237 / Type A) protein is Elongation factor P.